The chain runs to 436 residues: UDP-N-acetylmuramate--L-alanine ligase (436 aa).

108–114 (GAHGKTS) serves as a coordination point for ATP.

It belongs to the MurCDEF family.

The protein resides in the cytoplasm. The catalysed reaction is UDP-N-acetyl-alpha-D-muramate + L-alanine + ATP = UDP-N-acetyl-alpha-D-muramoyl-L-alanine + ADP + phosphate + H(+). Its pathway is cell wall biogenesis; peptidoglycan biosynthesis. Cell wall formation. This is UDP-N-acetylmuramate--L-alanine ligase from Bacillus cereus (strain B4264).